Consider the following 203-residue polypeptide: Short chain dehydrogenase/reductase dpmpH (203 aa).

Asp23, Tyr77, and Lys81 together coordinate NADP(+). Tyr77 acts as the Proton acceptor in catalysis. Lys81 (lowers pKa of active site Tyr) is an active-site residue.

It belongs to the short-chain dehydrogenases/reductases (SDR) family.

The protein operates within secondary metabolite biosynthesis; terpenoid biosynthesis. Functionally, short chain dehydrogenase/reductase; part of the gene cluster that mediates the biosynthesis of diterpenoid pyrones. The first step of the pathway is the synthesis of the alpha-pyrone moiety by the polyketide synthase dpmpA via condensation of one acetyl-CoA starter unit with 3 malonyl-CoA units and 2 methylations. The alpha-pyrone is then combined with geranylgeranyl pyrophosphate (GGPP) formed by the GGPP synthase dpmpD through the action of the prenyltransferase dpmpC to yield a linear alpha-pyrone diterpenoid. Subsequent steps in the diterpenoid pyrone biosynthetic pathway involve the decalin core formation, which is initiated by the epoxidation of the C10-C11 olefin by the FAD-dependent oxidoreductase dpmpE, and is followed by a cyclization cascade catalyzed by the terpene cyclase dpmpB. The short chain dehydrogenase/reductase dpmpG then oxidizes the 8S hydroxy group to a ketone and the short chain dehydrogenase/reductase dpmpH reduces the ketone to the 8R hydroxy group to yield higginsianin B. Higginsianin B is further methylated by the methyltransferase dpmpI to produce the intermediate named FDDP B. The cytochrome P450 monooxygenase dpmpJ then oxidizes the C-26 methyl to primary alcohol, producing the final diterpenoid pyrone with a C-26 primary alcohol on the gamma-pyrone moiety named FDDP C. This chain is Short chain dehydrogenase/reductase dpmpH, found in Macrophomina phaseolina (strain MS6) (Charcoal rot fungus).